The sequence spans 178 residues: ATP synthase subunit delta (178 aa).

Belongs to the ATPase delta chain family. In terms of assembly, F-type ATPases have 2 components, F(1) - the catalytic core - and F(0) - the membrane proton channel. F(1) has five subunits: alpha(3), beta(3), gamma(1), delta(1), epsilon(1). F(0) has three main subunits: a(1), b(2) and c(10-14). The alpha and beta chains form an alternating ring which encloses part of the gamma chain. F(1) is attached to F(0) by a central stalk formed by the gamma and epsilon chains, while a peripheral stalk is formed by the delta and b chains.

It localises to the cell membrane. Its function is as follows. F(1)F(0) ATP synthase produces ATP from ADP in the presence of a proton or sodium gradient. F-type ATPases consist of two structural domains, F(1) containing the extramembraneous catalytic core and F(0) containing the membrane proton channel, linked together by a central stalk and a peripheral stalk. During catalysis, ATP synthesis in the catalytic domain of F(1) is coupled via a rotary mechanism of the central stalk subunits to proton translocation. In terms of biological role, this protein is part of the stalk that links CF(0) to CF(1). It either transmits conformational changes from CF(0) to CF(1) or is implicated in proton conduction. This is ATP synthase subunit delta from Streptococcus equi subsp. zooepidemicus (strain H70).